The primary structure comprises 520 residues: Arabinose import ATP-binding protein AraG (520 aa).

Over residues 1–10 (MTTQTMTAVS) the composition is skewed to polar residues. The tract at residues 1-27 (MTTQTMTAVSGNDGDTGGDAAESPPGG) is disordered. ABC transporter domains follow at residues 30–265 (LALD…MVGR) and 265–516 (RSIE…LIKL). 62–69 (GENGAGKS) provides a ligand contact to ATP.

The protein belongs to the ABC transporter superfamily. Arabinose importer (TC 3.A.1.2.2) family. As to quaternary structure, the complex is composed of two ATP-binding proteins (AraG), two transmembrane proteins (AraH) and a solute-binding protein (AraF).

It localises to the cell inner membrane. It carries out the reaction L-arabinose(out) + ATP + H2O = L-arabinose(in) + ADP + phosphate + H(+). Functionally, part of the ABC transporter complex AraFGH involved in L-arabinose import. Responsible for energy coupling to the transport system. This chain is Arabinose import ATP-binding protein AraG, found in Azospirillum brasilense.